The following is a 395-amino-acid chain: Elongation factor Tu (395 aa).

Positions 10 to 205 (KPHVNIGTIG…VDNWIPIPPR (196 aa)) constitute a tr-type G domain. The interval 19–26 (GHVDHGKT) is G1. 19–26 (GHVDHGKT) lines the GTP pocket. T26 provides a ligand contact to Mg(2+). A G2 region spans residues 60-64 (GITIN). The segment at 81 to 84 (DCPG) is G3. Residues 81–85 (DCPGH) and 136–139 (NKVD) contribute to the GTP site. The interval 136–139 (NKVD) is G4. Residues 174–176 (SAL) form a G5 region.

Belongs to the TRAFAC class translation factor GTPase superfamily. Classic translation factor GTPase family. EF-Tu/EF-1A subfamily. As to quaternary structure, monomer.

The protein localises to the cytoplasm. The enzyme catalyses GTP + H2O = GDP + phosphate + H(+). Functionally, GTP hydrolase that promotes the GTP-dependent binding of aminoacyl-tRNA to the A-site of ribosomes during protein biosynthesis. The chain is Elongation factor Tu from Hymenobacter ocellatus (Parahymenobacter ocellatus).